A 233-amino-acid polypeptide reads, in one-letter code: Large ribosomal subunit protein uL1 (233 aa).

Belongs to the universal ribosomal protein uL1 family. Part of the 50S ribosomal subunit.

Its function is as follows. Binds directly to 23S rRNA. The L1 stalk is quite mobile in the ribosome, and is involved in E site tRNA release. In terms of biological role, protein L1 is also a translational repressor protein, it controls the translation of the L11 operon by binding to its mRNA. This Psychrobacter arcticus (strain DSM 17307 / VKM B-2377 / 273-4) protein is Large ribosomal subunit protein uL1.